Reading from the N-terminus, the 327-residue chain is BarH-like 1 homeobox protein (327 aa).

Disordered stretches follow at residues 1-90 (MEGS…AQSR), 113-181 (PYSS…PRKA), and 303-327 (LQGASEPPPPLPPLPGVLPRAAQPR). Residues 33-54 (RSPLELSPRSESSSDCSSPASP) are compositionally biased toward low complexity. Over residues 79–90 (QPGQLSAPAQSR) the composition is skewed to polar residues. Composition is skewed to basic and acidic residues over residues 133–143 (AGEDFRDKLDK) and 152–166 (SEYKVKEEGDREISS). The segment at residues 178–237 (PRKARTAFTDHQLAQLERSFERQKYLSVQDRMELAASLNLTDTQVKTWYQNRRTKWKRQT) is a DNA-binding region (homeobox). The segment covering 308–318 (EPPPPLPPLPG) has biased composition (pro residues).

This sequence belongs to the BAR homeobox family.

Its subcellular location is the nucleus. In Mus musculus (Mouse), this protein is BarH-like 1 homeobox protein (Barhl1).